A 119-amino-acid chain; its full sequence is Dihydroneopterin aldolase (119 aa).

Residues Glu21, Tyr53, and 72 to 73 contribute to the substrate site; that span reads IE. The Proton donor/acceptor role is filled by Lys99.

This sequence belongs to the DHNA family.

It catalyses the reaction 7,8-dihydroneopterin = 6-hydroxymethyl-7,8-dihydropterin + glycolaldehyde. It participates in cofactor biosynthesis; tetrahydrofolate biosynthesis; 2-amino-4-hydroxy-6-hydroxymethyl-7,8-dihydropteridine diphosphate from 7,8-dihydroneopterin triphosphate: step 3/4. In terms of biological role, catalyzes the conversion of 7,8-dihydroneopterin to 6-hydroxymethyl-7,8-dihydropterin. This is Dihydroneopterin aldolase (folB) from Streptococcus pyogenes serotype M1.